The sequence spans 270 residues: Tetraspanin-18 (270 aa).

The Cytoplasmic portion of the chain corresponds to 1-15; it reads MRRNCCHVSFASTLK. A helical transmembrane segment spans residues 16-36; the sequence is ILNFVQAFIGVSIIIYSIWML. Residues 37 to 99 are Extracellular-facing; that stretch reads HEYSRHLPVD…LRSLDLPAPW (63 aa). The chain crosses the membrane as a helical span at residues 100–120; it reads FIYSFMAVGILVCIVTFIGFI. The Cytoplasmic portion of the chain corresponds to 121-132; sequence AAEAINGCCLCF. A helical membrane pass occupies residues 133–153; it reads YSILKTLLILLEAALVAYIAI. The Extracellular portion of the chain corresponds to 154 to 183; it reads DRHWEKDLPYDPTGELSSLRAFIEENIDIC. Residues 184-204 traverse the membrane as a helical segment; sequence KWVGIAVVAVQLLSLLLAMVL. Topologically, residues 205–270 are cytoplasmic; the sequence is RAMVSTPKPE…NQSPPVNPKG (66 aa). Positions 212–249 are disordered; sequence KPELDEEEDDENPRSRTWDPLLGPQGNQAPAGSSKIEN. The segment covering 236 to 249 has biased composition (polar residues); sequence QGNQAPAGSSKIEN. S245 is subject to Phosphoserine.

This sequence belongs to the tetraspanin (TM4SF) family. As to quaternary structure, homodimer. Constituent of tobamovirus replication complex. As to expression, expressed in rosette leaves.

The protein localises to the membrane. It localises to the vacuole membrane. Its function is as follows. May be involved in the regulation of cell differentiation. Functionally, promotes intracellular multiplication of tobamoviruses, probably being a component of the replication complex. The polypeptide is Tetraspanin-18 (TOM2AH2) (Arabidopsis thaliana (Mouse-ear cress)).